A 595-amino-acid chain; its full sequence is Quinoprotein alcohol dehydrogenase PedH (595 aa).

A signal peptide spans 1-27; sequence MTRSPRRPLFAVSLVLSAMLLAGAAHA. Glutamine 87 serves as a coordination point for pyrroloquinoline quinone. The cysteines at positions 131 and 132 are disulfide-linked. Residues arginine 137, serine 181, glycine 197, and glycine 198 each contribute to the pyrroloquinoline quinone site. Glutamate 199 lines the Pr(3+) pocket. Tryptophan 263 provides a ligand contact to pyrroloquinoline quinone. Pr(3+) is bound by residues asparagine 281, aspartate 323, and aspartate 325. Catalysis depends on aspartate 323, which acts as the Proton acceptor. The pyrroloquinoline quinone site is built by arginine 350, asparagine 417, tryptophan 493, and alanine 557.

This sequence belongs to the bacterial PQQ dehydrogenase family. It depends on Pr(3+) as a cofactor. Nd(3+) is required as a cofactor. Requires La(3+) as cofactor. The cofactor is Ce(3+). Sm(3+) serves as cofactor. It depends on pyrroloquinoline quinone as a cofactor. In terms of processing, the disulfide ring formed between the two adjacent cysteine residues Cys-131 and Cys-132 is essential for efficient electron transfer at pH 7 from PedH to its natural electron acceptor cytochrome c550.

The protein localises to the periplasm. It carries out the reaction a primary alcohol + 2 Fe(III)-[cytochrome c] = an aldehyde + 2 Fe(II)-[cytochrome c] + 2 H(+). It catalyses the reaction ethanol + 2 Fe(III)-[cytochrome c] = acetaldehyde + 2 Fe(II)-[cytochrome c] + 2 H(+). The catalysed reaction is butan-1-ol + 2 Fe(III)-[cytochrome c] = butanal + 2 Fe(II)-[cytochrome c] + 2 H(+). The enzyme catalyses butan-2-ol + 2 Fe(III)-[cytochrome c] = butan-2-one + 2 Fe(II)-[cytochrome c] + 2 H(+). It carries out the reaction 2-phenylethanol + 2 Fe(III)-[cytochrome c] = 2-phenylacetaldehyde + 2 Fe(II)-[cytochrome c] + 2 H(+). It catalyses the reaction octan-1-ol + 2 Fe(III)-[cytochrome c] = octanal + 2 Fe(II)-[cytochrome c] + 2 H(+). The catalysed reaction is hexan-1-ol + 2 Fe(III)-[cytochrome c] = hexanal + 2 Fe(II)-[cytochrome c] + 2 H(+). The enzyme catalyses cinnamyl alcohol + 2 Fe(III)-[cytochrome c] = cinnamaldehyde + 2 Fe(II)-[cytochrome c] + 2 H(+). It carries out the reaction farnesol + 2 Fe(III)-[cytochrome c] = farnesal + 2 Fe(II)-[cytochrome c] + 2 H(+). It catalyses the reaction an aldehyde + 2 Fe(III)-[cytochrome c] + H2O = a carboxylate + 2 Fe(II)-[cytochrome c] + 3 H(+). The catalysed reaction is acetaldehyde + 2 Fe(III)-[cytochrome c] + H2O = 2 Fe(II)-[cytochrome c] + acetate + 3 H(+). The enzyme catalyses butanal + 2 Fe(III)-[cytochrome c] + H2O = butanoate + 2 Fe(II)-[cytochrome c] + 3 H(+). It carries out the reaction hexanal + 2 Fe(III)-[cytochrome c] + H2O = hexanoate + 2 Fe(II)-[cytochrome c] + 3 H(+). It catalyses the reaction octanal + 2 Fe(III)-[cytochrome c] + H2O = octanoate + 2 Fe(II)-[cytochrome c] + 3 H(+). Functionally, alcohol dehydrogenase that catalyzes the oxidation of a range of substrates, including linear and aromatic primary and secondary alcohols, as well as aldehydes, but only in the presence of lanthanides, allowing bacterial growth with a variety of volatile organic compounds (VOCs) as carbon and energy sources. Is also involved in the transcriptional regulation of pedE and pedH, most likely acting as a lanthanide sensory module. Uses a specific inducible cytochrome c550, encoded by the adjacent gene in the locus, as electron acceptor. In Pseudomonas putida (strain ATCC 47054 / DSM 6125 / CFBP 8728 / NCIMB 11950 / KT2440), this protein is Quinoprotein alcohol dehydrogenase PedH.